The sequence spans 488 residues: Probable 26S proteasome non-ATPase regulatory subunit 3 (488 aa).

The disordered stretch occupies residues 1–20; it reads MTQDVEMKEQAAPPSNSLSS. The region spanning 240-421 is the PCI domain; it reads SRYLFYLGKI…GWMVSKETGD (182 aa). The interval 452 to 488 is disordered; the sequence is FPPNSHKEKESAEKRRERQQQEQELAKHIAEEDDDDF. The segment covering 456-481 has biased composition (basic and acidic residues); that stretch reads SHKEKESAEKRRERQQQEQELAKHIA.

The protein belongs to the proteasome subunit S3 family. In terms of assembly, the 26S proteasome is composed of a core protease, known as the 20S proteasome, capped at one or both ends by the 19S regulatory complex (RC). The RC is composed of at least 18 different subunits in two subcomplexes, the base and the lid, which form the portions proximal and distal to the 20S proteolytic core, respectively.

The protein resides in the nucleus. Functionally, acts as a regulatory subunit of the 26 proteasome which is involved in the ATP-dependent degradation of ubiquitinated proteins. This chain is Probable 26S proteasome non-ATPase regulatory subunit 3 (21D7), found in Nicotiana tabacum (Common tobacco).